Consider the following 28-residue polypeptide: 3,4-dihydroxybenzoate decarboxylase (28 aa).

As to quaternary structure, homopentamer.

It carries out the reaction 3,4-dihydroxybenzoate + H(+) = catechol + CO2. Inhibited by oxygen. Completely inhibited by HgCl(2). Partially inhibited by ZnSO(4), 2,3,4-trihydroxybeonzoate and 3,4,5-trihydroxybeonzoate. Unaffected by KCl, MnCl(2) or EDTA. Not stimulated by thiamine phosphate, pyridoxal 5'-phosphate or biotin. Not inhibited by hydroxylamine, NaBH(4) or avidin. Reversibly catalyzes the decarboxylation of 3,4-dihydroxybenzoate to catechol. Inactive toward 4-hydroxybenzoate and other benzoate derivatives. The protein is 3,4-dihydroxybenzoate decarboxylase of Sedimentibacter hydroxybenzoicus (Clostridium hydroxybenzoicum).